Consider the following 250-residue polypeptide: uncharacterized protein (250 aa).

A signal peptide spans 1-25; that stretch reads MKTLRTLCVLMILSGVIFFGLKIDA.

This is an uncharacterized protein from Bacillus subtilis (strain 168).